Reading from the N-terminus, the 238-residue chain is Large ribosomal subunit protein uL3 (238 aa).

Gln157 carries the N5-methylglutamine modification.

The protein belongs to the universal ribosomal protein uL3 family. As to quaternary structure, part of the 50S ribosomal subunit. Forms a cluster with proteins L14 and L19. Post-translationally, methylated by PrmB.

Its function is as follows. One of the primary rRNA binding proteins, it binds directly near the 3'-end of the 23S rRNA, where it nucleates assembly of the 50S subunit. This chain is Large ribosomal subunit protein uL3, found in Ruthia magnifica subsp. Calyptogena magnifica.